A 197-amino-acid chain; its full sequence is Phosphoheptose isomerase (197 aa).

The region spanning 34–196 (MVQCLLGGNK…DRTLFPQDEQ (163 aa)) is the SIS domain. 49-51 (NGG) lines the substrate pocket. The Zn(2+) site is built by histidine 58 and glutamate 62. Residues glutamate 62, 91–92 (ND), 117–119 (STS), serine 122, and glutamine 172 contribute to the substrate site. The Zn(2+) site is built by glutamine 172 and histidine 180.

The protein belongs to the SIS family. GmhA subfamily. As to quaternary structure, homotetramer. Requires Zn(2+) as cofactor.

Its subcellular location is the cytoplasm. The catalysed reaction is 2 D-sedoheptulose 7-phosphate = D-glycero-alpha-D-manno-heptose 7-phosphate + D-glycero-beta-D-manno-heptose 7-phosphate. It functions in the pathway carbohydrate biosynthesis; D-glycero-D-manno-heptose 7-phosphate biosynthesis; D-glycero-alpha-D-manno-heptose 7-phosphate and D-glycero-beta-D-manno-heptose 7-phosphate from sedoheptulose 7-phosphate: step 1/1. Catalyzes the isomerization of sedoheptulose 7-phosphate in D-glycero-D-manno-heptose 7-phosphate. In Shewanella oneidensis (strain ATCC 700550 / JCM 31522 / CIP 106686 / LMG 19005 / NCIMB 14063 / MR-1), this protein is Phosphoheptose isomerase.